We begin with the raw amino-acid sequence, 264 residues long: Thymidylate synthase (264 aa).

Arginine 21 provides a ligand contact to dUMP. Residue histidine 51 coordinates (6R)-5,10-methylene-5,6,7,8-tetrahydrofolate. 126–127 contributes to the dUMP binding site; that stretch reads RR. The active-site Nucleophile is the cysteine 146. Residues 166-169, asparagine 177, and 207-209 contribute to the dUMP site; these read RSAD and HIY. (6R)-5,10-methylene-5,6,7,8-tetrahydrofolate is bound at residue aspartate 169. Alanine 263 provides a ligand contact to (6R)-5,10-methylene-5,6,7,8-tetrahydrofolate.

This sequence belongs to the thymidylate synthase family. Bacterial-type ThyA subfamily. As to quaternary structure, homodimer.

The protein resides in the cytoplasm. The enzyme catalyses dUMP + (6R)-5,10-methylene-5,6,7,8-tetrahydrofolate = 7,8-dihydrofolate + dTMP. It functions in the pathway pyrimidine metabolism; dTTP biosynthesis. Catalyzes the reductive methylation of 2'-deoxyuridine-5'-monophosphate (dUMP) to 2'-deoxythymidine-5'-monophosphate (dTMP) while utilizing 5,10-methylenetetrahydrofolate (mTHF) as the methyl donor and reductant in the reaction, yielding dihydrofolate (DHF) as a by-product. This enzymatic reaction provides an intracellular de novo source of dTMP, an essential precursor for DNA biosynthesis. The polypeptide is Thymidylate synthase (Ruminiclostridium cellulolyticum (strain ATCC 35319 / DSM 5812 / JCM 6584 / H10) (Clostridium cellulolyticum)).